Here is a 535-residue protein sequence, read N- to C-terminus: Cytochrome c oxidase subunit 1 (535 aa).

The chain crosses the membrane as a helical span at residues 17–37 (ILYFIFAIFSGVIGSTMSLII). Positions 40, 43, and 45 each coordinate Ca(2+). 6 helical membrane passes run 58 to 78 (VLVV…GLVG), 104 to 124 (FWLL…ESWA), 147 to 167 (LGIF…INFI), 184 to 204 (PLFV…LPVL), 236 to 256 (LFWF…FGII), and 268 to 288 (VFGE…GFLV). His63 is a Fe(II)-heme a binding site. His242 lines the Cu cation pocket. The 1'-histidyl-3'-tyrosine (His-Tyr) cross-link spans 242 to 246 (HPEVY). Tyr246 contacts O2. Cu cation is bound by residues His291 and His292. 2 helical membrane-spanning segments follow: residues 311–331 (MVIA…LYGG) and 339–359 (MLYA…GVAL). The Mg(2+) site is built by His369 and Asp370. The next 2 helical transmembrane spans lie at 373–393 (YVVG…LFAG) and 413–433 (IQFW…HFLG). Heme a3 is bound at residue His377. His379 contributes to the Fe(II)-heme a binding site. Pro442 is a binding site for Ca(2+). Residues 453-473 (YVSSIGSVIAIISLALFIYII) traverse the membrane as a helical segment.

It belongs to the heme-copper respiratory oxidase family. In terms of assembly, component of the cytochrome c oxidase (complex IV, CIV), a multisubunit enzyme composed of a catalytic core of 3 subunits and several supernumerary subunits. The complex exists as a monomer or a dimer and forms supercomplexes (SCs) in the inner mitochondrial membrane with ubiquinol-cytochrome c oxidoreductase (cytochrome b-c1 complex, complex III, CIII). It depends on heme as a cofactor. Cu cation is required as a cofactor.

It is found in the mitochondrion inner membrane. It catalyses the reaction 4 Fe(II)-[cytochrome c] + O2 + 8 H(+)(in) = 4 Fe(III)-[cytochrome c] + 2 H2O + 4 H(+)(out). Its pathway is energy metabolism; oxidative phosphorylation. Component of the cytochrome c oxidase, the last enzyme in the mitochondrial electron transport chain which drives oxidative phosphorylation. The respiratory chain contains 3 multisubunit complexes succinate dehydrogenase (complex II, CII), ubiquinol-cytochrome c oxidoreductase (cytochrome b-c1 complex, complex III, CIII) and cytochrome c oxidase (complex IV, CIV), that cooperate to transfer electrons derived from NADH and succinate to molecular oxygen, creating an electrochemical gradient over the inner membrane that drives transmembrane transport and the ATP synthase. Cytochrome c oxidase is the component of the respiratory chain that catalyzes the reduction of oxygen to water. Electrons originating from reduced cytochrome c in the intermembrane space (IMS) are transferred via the dinuclear copper A center (CU(A)) of subunit 2 and heme A of subunit 1 to the active site in subunit 1, a binuclear center (BNC) formed by heme A3 and copper B (CU(B)). The BNC reduces molecular oxygen to 2 water molecules using 4 electrons from cytochrome c in the IMS and 4 protons from the mitochondrial matrix. This chain is Cytochrome c oxidase subunit 1 (COX1), found in Wickerhamomyces canadensis (Yeast).